A 343-amino-acid chain; its full sequence is Succinylglutamate desuccinylase (343 aa).

3 residues coordinate Zn(2+): His60, Glu63, and His157. Residue Glu221 is part of the active site.

Belongs to the AspA/AstE family. Succinylglutamate desuccinylase subfamily. It depends on Zn(2+) as a cofactor.

The catalysed reaction is N-succinyl-L-glutamate + H2O = L-glutamate + succinate. Its pathway is amino-acid degradation; L-arginine degradation via AST pathway; L-glutamate and succinate from L-arginine: step 5/5. Its function is as follows. Transforms N(2)-succinylglutamate into succinate and glutamate. The chain is Succinylglutamate desuccinylase from Idiomarina loihiensis (strain ATCC BAA-735 / DSM 15497 / L2-TR).